Here is a 109-residue protein sequence, read N- to C-terminus: Ferredoxin (109 aa).

2 4Fe-4S ferredoxin-type domains span residues 2 to 30 and 31 to 60; these read TYVV…YEGE and FMLV…PESP. [3Fe-4S] cluster contacts are provided by Cys9 and Cys17. The [4Fe-4S] cluster site is built by Cys21, Cys40, Cys43, and Cys46. A [3Fe-4S] cluster-binding site is contributed by Cys50.

[4Fe-4S] cluster is required as a cofactor. Requires [3Fe-4S] cluster as cofactor.

Its function is as follows. Ferredoxins are iron-sulfur proteins that transfer electrons in a wide variety of metabolic reactions. The polypeptide is Ferredoxin (fdxA) (Rickettsia felis (strain ATCC VR-1525 / URRWXCal2) (Rickettsia azadi)).